The sequence spans 92 residues: YcgL domain-containing protein VC_1957 (92 aa).

The 84-residue stretch at 1 to 84 folds into the YcgL domain; that stretch reads MLCSIYKSPK…PPENLLEQHK (84 aa). A disordered region spans residues 69–92; that stretch reads FLQLPPPPENLLEQHKERKARQTP.

The protein is YcgL domain-containing protein VC_1957 of Vibrio cholerae serotype O1 (strain ATCC 39315 / El Tor Inaba N16961).